A 515-amino-acid polypeptide reads, in one-letter code: Tyrosine decarboxylase 1 (515 aa).

2 consecutive repeat copies span residues 81 to 138 (DDIT…TELE) and 141 to 192 (VTDW…GKDQ). The tract at residues 81–192 (DDITNHIVPG…KVLNKIGKDQ (112 aa)) is 2 X approximate tandem repeats. A105 lines the substrate pocket. T169 and C170 together coordinate pyridoxal 5'-phosphate. H205 is a binding site for substrate. Pyridoxal 5'-phosphate is bound by residues T264 and N318. The residue at position 321 (K321) is an N6-(pyridoxal phosphate)lysine.

Belongs to the group II decarboxylase family. It depends on pyridoxal 5'-phosphate as a cofactor. As to expression, mostly expressed in bulbs, and, to a lower extent, in stems, roots, leaves and flowers.

The enzyme catalyses L-tyrosine + H(+) = tyramine + CO2. The protein operates within alkaloid biosynthesis. Its function is as follows. Catalyzes the decarboxylation of L-tyrosine to tyramine, which is converted to norbelladine, a precursor to all Amaryllidaceae alkaloids such as galanthamine, lycorine and haemanthamine, and including haemanthamine- and crinamine-type alkaloids, promising anticancer agents. The sequence is that of Tyrosine decarboxylase 1 from Narcissus pseudonarcissus (Daffodil).